The sequence spans 248 residues: Undecaprenyl-diphosphatase (248 aa).

Transmembrane regions (helical) follow at residues Ile-4–Leu-24, Phe-40–Val-60, Tyr-74–Phe-94, Ser-101–Val-121, Ile-134–Ile-154, Ala-174–Thr-194, Ser-201–Leu-221, and Lys-228–Gly-248.

The protein belongs to the UppP family.

It localises to the cell inner membrane. It catalyses the reaction di-trans,octa-cis-undecaprenyl diphosphate + H2O = di-trans,octa-cis-undecaprenyl phosphate + phosphate + H(+). Catalyzes the dephosphorylation of undecaprenyl diphosphate (UPP). Confers resistance to bacitracin. The protein is Undecaprenyl-diphosphatase of Thermosipho africanus (strain TCF52B).